Consider the following 65-residue polypeptide: Large ribosomal subunit protein bL33c (65 aa).

The protein belongs to the bacterial ribosomal protein bL33 family.

It localises to the plastid. The protein localises to the chloroplast. This is Large ribosomal subunit protein bL33c from Chaetosphaeridium globosum (Charophycean green alga).